We begin with the raw amino-acid sequence, 485 residues long: Adenosylhomocysteinase (485 aa).

Thr-60, Asp-146, and Glu-208 together coordinate substrate. Position 209 to 211 (209 to 211) interacts with NAD(+); that stretch reads TTT. The substrate site is built by Lys-238 and Asp-242. NAD(+)-binding positions include Asn-243, 272–277, Glu-295, Asn-330, 351–353, and Asn-399; these read GYGDVG and IGH.

This sequence belongs to the adenosylhomocysteinase family. Requires NAD(+) as cofactor.

Its subcellular location is the cytoplasm. It catalyses the reaction S-adenosyl-L-homocysteine + H2O = L-homocysteine + adenosine. It functions in the pathway amino-acid biosynthesis; L-homocysteine biosynthesis; L-homocysteine from S-adenosyl-L-homocysteine: step 1/1. May play a key role in the regulation of the intracellular concentration of adenosylhomocysteine. The protein is Adenosylhomocysteinase of Streptomyces griseus subsp. griseus (strain JCM 4626 / CBS 651.72 / NBRC 13350 / KCC S-0626 / ISP 5235).